The following is a 252-amino-acid chain: Neurexophilin-3 (252 aa).

An N-terminal signal peptide occupies residues Met1–Gly22. Residues Gln23 to Val75 form an II region. The tract at residues Pro27–Pro59 is disordered. Basic residues predominate over residues Arg45–Pro55. N-linked (GlcNAc...) asparagine glycosylation is found at Asn62, Asn127, Asn137, and Asn143. The segment at Trp76–Phe157 is III. The segment at His158–Glu166 is IV (linker domain). The v (Cys-rich) stretch occupies residues Ala167–Gly252.

The protein belongs to the neurexophilin family. In terms of processing, may be proteolytically processed at the boundary between the N-terminal non-conserved and the central conserved domain in neuron-like cells. Brain. Detected in several other tissues.

It is found in the secreted. In terms of biological role, may be signaling molecules that resemble neuropeptides. Ligand for alpha-neurexins. The polypeptide is Neurexophilin-3 (Nxph3) (Rattus norvegicus (Rat)).